Here is a 314-residue protein sequence, read N- to C-terminus: Transmembrane protein 178B (314 aa).

A signal peptide spans 1-24; sequence MRLLAGAGLCLALAALALLAVALS. The interval 32–83 is disordered; that stretch reads DARRHRDRCRKPGGKRNDPGYMYTPGQHLPLRGEPPSSRIRSPRGGEPGGVR. Over residues 36–45 the composition is skewed to basic residues; the sequence is HRDRCRKPGG. A run of 3 helical transmembrane segments spans residues 194-214, 228-248, and 274-294; these read AGFI…GVLG, LLFL…VAGI, and MFCA…CTLA.

This sequence belongs to the TMEM178 family.

The protein resides in the membrane. The sequence is that of Transmembrane protein 178B (tmem178b) from Xenopus tropicalis (Western clawed frog).